Here is a 78-residue protein sequence, read N- to C-terminus: Beta-defensin 29 (78 aa).

The first 23 residues, 1–23, serve as a signal peptide directing secretion; sequence MPVTKSYFMTVVVVLILVDETTG. Cystine bridges form between cysteine 40-cysteine 67, cysteine 47-cysteine 61, and cysteine 51-cysteine 68.

This sequence belongs to the beta-defensin family. In terms of tissue distribution, highly expressed in the cauda epididymis.

Its subcellular location is the secreted. In terms of biological role, has antibacterial activity. The chain is Beta-defensin 29 (Defb29) from Mus musculus (Mouse).